Reading from the N-terminus, the 144-residue chain is Large ribosomal subunit protein uL15 (144 aa).

The disordered stretch occupies residues 1-49 (MIKLECLQDPSPRKRRTKLLGRGPSSGHGKTSSRGHKGDCSRSGYKRRF).

It belongs to the universal ribosomal protein uL15 family. Part of the 50S ribosomal subunit.

In terms of biological role, binds to the 23S rRNA. The sequence is that of Large ribosomal subunit protein uL15 from Chlamydia trachomatis serovar A (strain ATCC VR-571B / DSM 19440 / HAR-13).